Here is a 476-residue protein sequence, read N- to C-terminus: Bridging integrator 2 (476 aa).

In terms of domain architecture, BAR spans 26 to 242 (VLQKLGKTVE…MGKLDKQHSS (217 aa)). 2 disordered regions span residues 269–369 (YPCP…TEGA) and 395–476 (GAAP…LTPL). The span at 279–292 (EPSSGAEQTPTSPR) shows a compositional bias: polar residues. A compositionally biased stretch (pro residues) spans 310–324 (PAEPGAPMPGPPPAS). The segment covering 325–339 (PTSVRSASESESECS) has biased composition (low complexity). Basic and acidic residues predominate over residues 340-353 (GESREIDLSPKEME). Polar residues predominate over residues 461 to 476 (VSCNPPQDPSESLTPL).

The protein localises to the cytoplasm. The protein is Bridging integrator 2 (BIN2) of Gallus gallus (Chicken).